The chain runs to 700 residues: MKVREILVTSALPYANGDIHLGHLVEYIQTDIWVRSMKAQGHKVTYVCADDAHGTAIMLKAEDNGVTPEQQIANVQAAHEADFAKFLINFDNYHSTHSEENREFSELIYRRLRDTGHISTRDVEQLFDPEKQLFLADRFVKGTCPECAAPDQYGDNCEVCGTTYDATELKDPYSTLSNATPILKTSKHYFFDLPEFEQFLKDWTRSDNRLQVSVANKLQEWFDAGLTSWDISRDAPYFGFQIPDTPSDEPDKYFYVWLDAPVGYMASFKNLCDKRAGTDDALDFDHYWAQENEHKTEVYHFIGKDIVYFHALFWPAMLAGSELRTPTAVFAHGFLMVNGEKMSKSRGTFIKADTYAEHLHPEYLRYYFASKLSDKVEDINLDLEDFMQKVNSDLVGKVVNIASRSAGFLLKKYDGMLTDVCAEPSLLEDITKTGDEIAAAYENREFSRAMRLIMQCADKANEYIDEKKPWALAKVEGAEQEVQDVCSVAINIFRQLMVYLAPVLPELTANAKEFLNINDLSFASRNEWLLGHQINKFKPLMQRIDEKDVAAMVDASKASLTQVDAPTASQDDKMVAKNTAPAATPSSTEQADYIGIEDFAKVEMKVAHVIACSYVEGADKLLQFTLDVGEAQPRNVFSGIRKFYEPEQLLDKKVICVTNLAPRKMKFGISEGMILSSGDPKTQLTVVTLPDNCVIGDLLA.

A 'HIGH' region motif is present at residues 13-23 (PYANGDIHLGH). The Zn(2+) site is built by C144, C147, C157, and C160. The short motif at 341-345 (KMSKS) is the 'KMSKS' region element. Position 344 (K344) interacts with ATP. Residues 598–700 (DFAKVEMKVA…DNCVIGDLLA (103 aa)) form the tRNA-binding domain.

The protein belongs to the class-I aminoacyl-tRNA synthetase family. MetG type 1 subfamily. In terms of assembly, homodimer. It depends on Zn(2+) as a cofactor.

Its subcellular location is the cytoplasm. It carries out the reaction tRNA(Met) + L-methionine + ATP = L-methionyl-tRNA(Met) + AMP + diphosphate. Its function is as follows. Is required not only for elongation of protein synthesis but also for the initiation of all mRNA translation through initiator tRNA(fMet) aminoacylation. This chain is Methionine--tRNA ligase, found in Psychrobacter arcticus (strain DSM 17307 / VKM B-2377 / 273-4).